We begin with the raw amino-acid sequence, 88 residues long: NADH-ubiquinone oxidoreductase chain 4L (88 aa).

A run of 3 helical transmembrane segments spans residues 1–21 (MNLS…NRKN), 22–42 (IILM…LVLM), and 55–75 (FSIY…SILV).

The protein belongs to the complex I subunit 4L family.

Its subcellular location is the mitochondrion membrane. It catalyses the reaction a ubiquinone + NADH + 5 H(+)(in) = a ubiquinol + NAD(+) + 4 H(+)(out). Functionally, core subunit of the mitochondrial membrane respiratory chain NADH dehydrogenase (Complex I) that is believed to belong to the minimal assembly required for catalysis. Complex I functions in the transfer of electrons from NADH to the respiratory chain. The immediate electron acceptor for the enzyme is believed to be ubiquinone. This is NADH-ubiquinone oxidoreductase chain 4L (ND4L) from Schizophyllum commune (Split gill fungus).